The chain runs to 425 residues: Glutamate-1-semialdehyde 2,1-aminomutase (425 aa).

Residue lysine 265 is modified to N6-(pyridoxal phosphate)lysine.

It belongs to the class-III pyridoxal-phosphate-dependent aminotransferase family. HemL subfamily. In terms of assembly, homodimer. Pyridoxal 5'-phosphate serves as cofactor.

The protein resides in the cytoplasm. It catalyses the reaction (S)-4-amino-5-oxopentanoate = 5-aminolevulinate. It functions in the pathway porphyrin-containing compound metabolism; protoporphyrin-IX biosynthesis; 5-aminolevulinate from L-glutamyl-tRNA(Glu): step 2/2. The chain is Glutamate-1-semialdehyde 2,1-aminomutase from Nitrosospira multiformis (strain ATCC 25196 / NCIMB 11849 / C 71).